A 355-amino-acid polypeptide reads, in one-letter code: NADH-quinone oxidoreductase subunit H (355 aa).

8 helical membrane-spanning segments follow: residues 25–45 (IVRI…LILW), 91–111 (WLYL…WAVI), 126–146 (LLYA…AGWA), 170–190 (MGFA…SEIV), 205–225 (FLSW…VSGI), 253–273 (MAFA…SALA), 290–310 (FIPG…VFIW), and 330–350 (VFLP…MSPL).

It belongs to the complex I subunit 1 family. In terms of assembly, NDH-1 is composed of 14 different subunits. Subunits NuoA, H, J, K, L, M, N constitute the membrane sector of the complex.

It localises to the cell inner membrane. The catalysed reaction is a quinone + NADH + 5 H(+)(in) = a quinol + NAD(+) + 4 H(+)(out). Functionally, NDH-1 shuttles electrons from NADH, via FMN and iron-sulfur (Fe-S) centers, to quinones in the respiratory chain. The immediate electron acceptor for the enzyme in this species is believed to be ubiquinone. Couples the redox reaction to proton translocation (for every two electrons transferred, four hydrogen ions are translocated across the cytoplasmic membrane), and thus conserves the redox energy in a proton gradient. This subunit may bind ubiquinone. This chain is NADH-quinone oxidoreductase subunit H, found in Burkholderia ambifaria (strain MC40-6).